A 63-amino-acid chain; its full sequence is Putative F-box protein At1g47702 (63 aa).

Residues 23–63 enclose the F-box domain; sequence KDRISDLPNRILGKIIVKLPLDEAVRIMALSKRWKSIWDDN.

The sequence is that of Putative F-box protein At1g47702 from Arabidopsis thaliana (Mouse-ear cress).